Here is a 308-residue protein sequence, read N- to C-terminus: Transaldolase (308 aa).

Lys-125 (schiff-base intermediate with substrate) is an active-site residue.

Belongs to the transaldolase family. Type 1 subfamily. As to quaternary structure, homodimer.

The protein resides in the cytoplasm. It catalyses the reaction D-sedoheptulose 7-phosphate + D-glyceraldehyde 3-phosphate = D-erythrose 4-phosphate + beta-D-fructose 6-phosphate. It functions in the pathway carbohydrate degradation; pentose phosphate pathway; D-glyceraldehyde 3-phosphate and beta-D-fructose 6-phosphate from D-ribose 5-phosphate and D-xylulose 5-phosphate (non-oxidative stage): step 2/3. Transaldolase is important for the balance of metabolites in the pentose-phosphate pathway. The polypeptide is Transaldolase (Pseudomonas putida (strain ATCC 47054 / DSM 6125 / CFBP 8728 / NCIMB 11950 / KT2440)).